The following is a 214-amino-acid chain: Probable nicotinate-nucleotide adenylyltransferase (214 aa).

The protein belongs to the NadD family.

The enzyme catalyses nicotinate beta-D-ribonucleotide + ATP + H(+) = deamido-NAD(+) + diphosphate. It participates in cofactor biosynthesis; NAD(+) biosynthesis; deamido-NAD(+) from nicotinate D-ribonucleotide: step 1/1. Functionally, catalyzes the reversible adenylation of nicotinate mononucleotide (NaMN) to nicotinic acid adenine dinucleotide (NaAD). The polypeptide is Probable nicotinate-nucleotide adenylyltransferase (Buchnera aphidicola subsp. Acyrthosiphon pisum (strain 5A)).